Here is a 1003-residue protein sequence, read N- to C-terminus: X-linked retinitis pigmentosa GTPase regulator (1003 aa).

RCC1 repeat units follow at residues 54–105 (NKLY…STEG), 106–158 (GKVY…LTED), 159–208 (GELF…VTTE), 209–261 (GQLY…LTEK), 262–313 (AVYT…ITDM), and 314–367 (GLMY…FATP). Ser-418 carries the post-translational modification Phosphoserine. The segment at 460–495 (TPEKEGLTQPEPDYFRDNMAKGKETDNSSATDSESL) is disordered. Positions 472–485 (DYFRDNMAKGKETD) are enriched in basic and acidic residues. The span at 486–495 (NSSATDSESL) shows a compositional bias: polar residues. Residue Ser-520 is modified to Phosphoserine. 4 disordered regions span residues 625–657 (FKAIAKESDGGQSQKDPEAEETVSEKENELAEM), 691–760 (ESKD…TDQN), 794–932 (LSEI…DVKK), and 968–1003 (AFKGNKKDANQNHMGQNHQDTSPPDMERRSKSCTIL). Over residues 693-715 (KDFVKDSRRNKQDVIFDSERESI) the composition is skewed to basic and acidic residues. Acidic residues-rich tracts occupy residues 716 to 726 (EEPDSYLEGES) and 797 to 821 (IPEEQEGAEDSEGSGIEEQEVEANE). Residues 827-848 (AGKEEKEIEILSDDLTDRAEDH) are compositionally biased toward basic and acidic residues. Positions 849–867 (EFSEDEEPEDMAEELDEDL) are enriched in acidic residues. Residues 882–896 (SLKKDETTKQEKRAI) show a composition bias toward basic and acidic residues. Over residues 913–924 (SSSSEVLNDSES) the composition is skewed to low complexity. The segment covering 978 to 989 (QNHMGQNHQDTS) has biased composition (polar residues). Cys-1000 is subject to Cysteine methyl ester. Residue Cys-1000 is the site of S-geranylgeranyl cysteine attachment. Residues 1001 to 1003 (TIL) constitute a propeptide, removed in mature form.

Interacts with PDE6D. Interacts with RPGRIP1. Interacts with RPGRIP1L. PDE6D, RPGRIP1 and RPGRIP1L may compete for the same binding sites. Interacts with NPM1. Interacts with SMC1A and SMC3. Interacts with CEP290. Interacts with WHRN. Interacts with SPATA7. Interacts with RAB37 and RAB8A (in GDP-bound forms); functions as GEF for RAB37 and RAB8A. Prenylated. As to expression, isoform 1 is expressed exclusively in testis. Isoforms 2, 3 and 4 are widely expressed.

It is found in the golgi apparatus. The protein resides in the cell projection. The protein localises to the cilium. It localises to the cytoplasm. Its subcellular location is the cytoskeleton. It is found in the cilium basal body. The protein resides in the microtubule organizing center. The protein localises to the centrosome. It localises to the cilium axoneme. Its subcellular location is the flagellum axoneme. Its function is as follows. Acts as a guanine-nucleotide releasing factor (GEF) for RAB8A and RAB37 by promoting the conversion of inactive RAB-GDP to the active form RAB-GTP. GEF activity towards RAB8A may facilitate ciliary trafficking by modulating ciliary intracellular localization of RAB8A. GEF activity towards RAB37 maintains autophagic homeostasis and retinal function. Involved in photoreceptor integrity. May control cilia formation by regulating actin stress filaments and cell contractility. May be involved in microtubule organization and regulation of transport in primary cilia. May play a critical role in spermatogenesis and in intraflagellar transport processes. This is X-linked retinitis pigmentosa GTPase regulator (RPGR) from Canis lupus familiaris (Dog).